The primary structure comprises 190 residues: Potassium-transporting ATPase KdpC subunit (190 aa).

Residues 13–33 (VGFLLLTLVCGVIYPGVVTII) form a helical membrane-spanning segment.

This sequence belongs to the KdpC family. As to quaternary structure, the system is composed of three essential subunits: KdpA, KdpB and KdpC.

The protein resides in the cell membrane. Functionally, part of the high-affinity ATP-driven potassium transport (or Kdp) system, which catalyzes the hydrolysis of ATP coupled with the electrogenic transport of potassium into the cytoplasm. This subunit acts as a catalytic chaperone that increases the ATP-binding affinity of the ATP-hydrolyzing subunit KdpB by the formation of a transient KdpB/KdpC/ATP ternary complex. The protein is Potassium-transporting ATPase KdpC subunit of Listeria innocua serovar 6a (strain ATCC BAA-680 / CLIP 11262).